The chain runs to 299 residues: 5,10-dihydrophenazine-1-carboxylate 9-dimethylallyltransferase (299 aa).

It belongs to the aromatic prenyltransferase family.

The catalysed reaction is 5,10-dihydrophenazine 1-carboxylate + dimethylallyl diphosphate = 5,10-dihydro-9-dimethylallylphenazine 1-carboxylate + diphosphate. Its pathway is antibiotic biosynthesis; phenazine biosynthesis. Does not require magnesium or any other divalent metal ions for activity. Involved in the biosynthesis of prenylated phenazines. Catalyzes the transfer of a dimethylallyl moiety to C-9 of 5,10-dihydrophenazine 1-carboxylate (dihydro-PCA). Specific for both dimethylallyl diphosphate and dihydro-PCA. The chain is 5,10-dihydrophenazine-1-carboxylate 9-dimethylallyltransferase from Streptomyces anulatus (Streptomyces chrysomallus).